The sequence spans 228 residues: Indole-3-glycerol phosphate synthase (228 aa).

It belongs to the TrpC family.

The enzyme catalyses 1-(2-carboxyphenylamino)-1-deoxy-D-ribulose 5-phosphate + H(+) = (1S,2R)-1-C-(indol-3-yl)glycerol 3-phosphate + CO2 + H2O. It participates in amino-acid biosynthesis; L-tryptophan biosynthesis; L-tryptophan from chorismate: step 4/5. The sequence is that of Indole-3-glycerol phosphate synthase from Pyrococcus furiosus (strain ATCC 43587 / DSM 3638 / JCM 8422 / Vc1).